Consider the following 46-residue polypeptide: Iota-conotoxin RXIA (46 aa).

4-hydroxyproline; partial is present on residues Pro2 and Pro11. 4 disulfides stabilise this stretch: Cys5–Cys19, Cys12–Cys22, Cys18–Cys27, and Cys21–Cys38. Position 29 is a 4-hydroxyproline (Pro29). Phe44 bears the D-phenylalanine mark.

This sequence belongs to the conotoxin I1 superfamily. The natural D-Phe-44 form of the peptide is more potent than the L-Phe-44 form. Expressed by the venom duct.

It localises to the secreted. Iota-conotoxins bind to voltage-gated sodium channels and act as agonists by shifting the voltage-dependence of activation to more hyperpolarized levels. This toxin acts on Nav1.6/SCN8A &gt; Nav1.2/SCN2A &gt; Nav1.7/SCN9A sodium channels. Produces general excitatory symptoms upon intracorporeal injection and repetitive action potentials in the frog cutaneous pectoris muscle. Natural peptide (with D-Phe) is active on nerve, but not on muscle. Synthetic peptide (with L-Phe) is not active on both nerve and muscle. In Conus radiatus (Rayed cone), this protein is Iota-conotoxin RXIA.